The chain runs to 121 residues: Insertion element IS406 uncharacterized 13.3 kDa protein (121 aa).

In Burkholderia multivorans (strain ATCC 17616 / 249), this protein is Insertion element IS406 uncharacterized 13.3 kDa protein.